Here is a 182-residue protein sequence, read N- to C-terminus: Oligoribonuclease (182 aa).

In terms of domain architecture, Exonuclease spans 8 to 171; sequence LIWIDLEMTG…DDIRESIKEL (164 aa). Residue Y129 is part of the active site.

Belongs to the oligoribonuclease family.

The protein localises to the cytoplasm. Its function is as follows. 3'-to-5' exoribonuclease specific for small oligoribonucleotides. The protein is Oligoribonuclease of Haemophilus influenzae (strain 86-028NP).